The following is a 125-amino-acid chain: Protein ApaG (125 aa).

The ApaG domain maps to 1 to 125 (MINSPRVCVQ…FRLAIPSLIN (125 aa)).

The polypeptide is Protein ApaG (Sodalis glossinidius (strain morsitans)).